The chain runs to 294 residues: Shikimate dehydrogenase (NADP(+)) (294 aa).

Shikimate is bound by residues 25 to 27 (SAS) and T72. Catalysis depends on K76, which acts as the Proton acceptor. Shikimate is bound by residues N97 and D112. NADP(+) contacts are provided by residues 136–140 (GAGGA) and T234. Y236 serves as a coordination point for shikimate. Residue G257 coordinates NADP(+).

This sequence belongs to the shikimate dehydrogenase family. Homodimer.

It catalyses the reaction shikimate + NADP(+) = 3-dehydroshikimate + NADPH + H(+). The protein operates within metabolic intermediate biosynthesis; chorismate biosynthesis; chorismate from D-erythrose 4-phosphate and phosphoenolpyruvate: step 4/7. Functionally, involved in the biosynthesis of the chorismate, which leads to the biosynthesis of aromatic amino acids. Catalyzes the reversible NADPH linked reduction of 3-dehydroshikimate (DHSA) to yield shikimate (SA). The sequence is that of Shikimate dehydrogenase (NADP(+)) from Symbiobacterium thermophilum (strain DSM 24528 / JCM 14929 / IAM 14863 / T).